Reading from the N-terminus, the 240-residue chain is Uridylate kinase (240 aa).

Residue 12 to 15 (KLSG) participates in ATP binding. Residues 20 to 25 (GEKGFG) are involved in allosteric activation by GTP. Gly54 contributes to the UMP binding site. Positions 55 and 59 each coordinate ATP. Residues Asp74 and 135–142 (TGSPYFST) contribute to the UMP site. The ATP site is built by Asn163, Tyr169, and Asp172.

This sequence belongs to the UMP kinase family. As to quaternary structure, homohexamer.

The protein resides in the cytoplasm. The catalysed reaction is UMP + ATP = UDP + ADP. It participates in pyrimidine metabolism; CTP biosynthesis via de novo pathway; UDP from UMP (UMPK route): step 1/1. With respect to regulation, allosterically activated by GTP. Inhibited by UTP. In terms of biological role, catalyzes the reversible phosphorylation of UMP to UDP. This Lactiplantibacillus plantarum (strain ATCC BAA-793 / NCIMB 8826 / WCFS1) (Lactobacillus plantarum) protein is Uridylate kinase.